The primary structure comprises 441 residues: ATP-dependent protease ATPase subunit HslU (441 aa).

Residues Ile-18, 60–65 (GVGKTE), Asp-254, Glu-319, and Arg-391 each bind ATP.

The protein belongs to the ClpX chaperone family. HslU subfamily. In terms of assembly, a double ring-shaped homohexamer of HslV is capped on each side by a ring-shaped HslU homohexamer. The assembly of the HslU/HslV complex is dependent on binding of ATP.

Its subcellular location is the cytoplasm. ATPase subunit of a proteasome-like degradation complex; this subunit has chaperone activity. The binding of ATP and its subsequent hydrolysis by HslU are essential for unfolding of protein substrates subsequently hydrolyzed by HslV. HslU recognizes the N-terminal part of its protein substrates and unfolds these before they are guided to HslV for hydrolysis. The polypeptide is ATP-dependent protease ATPase subunit HslU (Shewanella pealeana (strain ATCC 700345 / ANG-SQ1)).